Consider the following 342-residue polypeptide: Phosphoribosylformylglycinamidine cyclo-ligase (342 aa).

It belongs to the AIR synthase family.

The protein localises to the cytoplasm. It carries out the reaction 2-formamido-N(1)-(5-O-phospho-beta-D-ribosyl)acetamidine + ATP = 5-amino-1-(5-phospho-beta-D-ribosyl)imidazole + ADP + phosphate + H(+). It functions in the pathway purine metabolism; IMP biosynthesis via de novo pathway; 5-amino-1-(5-phospho-D-ribosyl)imidazole from N(2)-formyl-N(1)-(5-phospho-D-ribosyl)glycinamide: step 2/2. The polypeptide is Phosphoribosylformylglycinamidine cyclo-ligase (Latilactobacillus sakei subsp. sakei (strain 23K) (Lactobacillus sakei subsp. sakei)).